Consider the following 133-residue polypeptide: Small ribosomal subunit protein uS8 (133 aa).

The protein belongs to the universal ribosomal protein uS8 family. In terms of assembly, part of the 30S ribosomal subunit. Contacts proteins S5 and S12.

Its function is as follows. One of the primary rRNA binding proteins, it binds directly to 16S rRNA central domain where it helps coordinate assembly of the platform of the 30S subunit. The sequence is that of Small ribosomal subunit protein uS8 from Rhodopirellula baltica (strain DSM 10527 / NCIMB 13988 / SH1).